A 296-amino-acid polypeptide reads, in one-letter code: Protein FAM221A (296 aa).

The tract at residues 235–263 (MQPPSTSSPQPLAVGPSTQISSLRKPEED) is disordered. Over residues 237–256 (PPSTSSPQPLAVGPSTQISS) the composition is skewed to polar residues.

Belongs to the FAM221 family.

This chain is Protein FAM221A (Fam221a), found in Rattus norvegicus (Rat).